Reading from the N-terminus, the 86-residue chain is Small ribosomal subunit protein bS20 (86 aa).

Residues 1–27 (MANNKSAKKRAIQAEKRRQHNASRRSM) form a disordered region.

This sequence belongs to the bacterial ribosomal protein bS20 family.

Binds directly to 16S ribosomal RNA. The polypeptide is Small ribosomal subunit protein bS20 (Vibrio cholerae serotype O1 (strain ATCC 39541 / Classical Ogawa 395 / O395)).